The sequence spans 476 residues: Ribulose bisphosphate carboxylase large chain (476 aa).

Substrate-binding residues include N124 and T174. K176 (proton acceptor) is an active-site residue. Substrate is bound at residue K178. K202, D204, and E205 together coordinate Mg(2+). Residue K202 is modified to N6-carboxylysine. Catalysis depends on H295, which acts as the Proton acceptor. The substrate site is built by R296, H328, and S380.

The protein belongs to the RuBisCO large chain family. Type I subfamily. As to quaternary structure, heterohexadecamer of 8 large chains and 8 small chains; disulfide-linked. The disulfide link is formed within the large subunit homodimers. It depends on Mg(2+) as a cofactor. In terms of processing, the disulfide bond which can form in the large chain dimeric partners within the hexadecamer appears to be associated with oxidative stress and protein turnover.

It is found in the carboxysome. The catalysed reaction is 2 (2R)-3-phosphoglycerate + 2 H(+) = D-ribulose 1,5-bisphosphate + CO2 + H2O. The enzyme catalyses D-ribulose 1,5-bisphosphate + O2 = 2-phosphoglycolate + (2R)-3-phosphoglycerate + 2 H(+). Its function is as follows. RuBisCO catalyzes two reactions: the carboxylation of D-ribulose 1,5-bisphosphate, the primary event in carbon dioxide fixation, as well as the oxidative fragmentation of the pentose substrate in the photorespiration process. Both reactions occur simultaneously and in competition at the same active site. This is Ribulose bisphosphate carboxylase large chain from Nostoc punctiforme (strain ATCC 29133 / PCC 73102).